Here is a 207-residue protein sequence, read N- to C-terminus: uncharacterized protein (207 aa).

Active-site charge relay system residues include Ser119 and His160.

The protein belongs to the peptidase S51 family.

This is an uncharacterized protein from Pasteurella multocida (strain Pm70).